A 114-amino-acid polypeptide reads, in one-letter code: RutC family protein YoaB (114 aa).

The protein belongs to the RutC family.

This chain is RutC family protein YoaB (yoaB), found in Escherichia coli O6:H1 (strain CFT073 / ATCC 700928 / UPEC).